Reading from the N-terminus, the 1408-residue chain is Protein patched homolog 1 (1408 aa).

Residues 1–20 (MLTLLEPPGAKRSPTVGNYN) are disordered. Residues 1–136 (MLTLLEPPGA…GNTVHRNAWS (136 aa)) are Cytoplasmic-facing. Residues 137-157 (IILAVSMIFAVCCYGLQYVHI) form a helical membrane-spanning segment. Over 158–649 (ETDIVKLWVA…STSIADMLEE (492 aa)) the chain is Extracellular. The disordered stretch occupies residues 455–479 (STAPIPTTTTLSPEEARAAEEKEKK). The segment covering 468 to 479 (EEARAAEEKEKK) has biased composition (basic and acidic residues). N599 carries an N-linked (GlcNAc...) asparagine glycan. Residues 650–670 (FCQFNYTIILAGYALMLAYAI) form a helical membrane-spanning segment. Residues 654–816 (NYTIILAGYA…LTIYPAIISI (163 aa)) form the SSD domain. Residues 671–686 (VTQARFDNCLPATESS) lie on the Cytoplasmic side of the membrane. The chain crosses the membrane as a helical span at residues 687–707 (MGLALAGVLVVTFASVAGLGL). The Extracellular segment spans residues 708–709 (AT). A helical membrane pass occupies residues 710–730 (WFGIEFNAATTQIVPFLTLGI). Residues 731–765 (GVDNMFMLLHNYRDVVKLAGGHAEMAILMRETGMS) lie on the Cytoplasmic side of the membrane. The chain crosses the membrane as a helical span at residues 766–786 (ILCTSINNILSFLTGTLLPIP). Residues 787–795 (ALRSFCAQS) are Extracellular-facing. Residues 796 to 816 (SILLTFNFIAILTIYPAIISI) traverse the membrane as a helical segment. Residues 817-901 (DLRRKKAQRR…YYYIPFISKP (85 aa)) lie on the Cytoplasmic side of the membrane. The chain crosses the membrane as a helical span at residues 902–922 (ASKVAIIVGCCALLGASFIGM). Residues 923 to 1175 (RQSTLGLELG…QGIAFTFWEQ (253 aa)) are Extracellular-facing. 2 N-linked (GlcNAc...) asparagine glycosylation sites follow: N1026 and N1036. A helical membrane pass occupies residues 1176–1196 (YLFLTGNLMQAISIITISVFC). At 1197-1217 (VISVLLFNPWAALMVVCILGI) the chain is on the cytoplasmic side. The next 2 membrane-spanning stretches (helical) occupy residues 1218–1238 (MTCELAGFMGLVGIKLNPVSA) and 1239–1259 (VTLITAVGIGVEFTVHVVVSF). Topologically, residues 1260 to 1276 (LTALGTRSQRTSSAVDR) are extracellular. Residues 1277-1297 (VFVPVIHGSFSTLLGILMLGF) traverse the membrane as a helical segment. Residues 1298-1305 (SEFEFVVK) lie on the Cytoplasmic side of the membrane. A helical membrane pass occupies residues 1306–1326 (YFFIVMTALICIGIINGLILL). Residues 1327 to 1408 (PVLLSWFGPR…GNNTRRLPAV (82 aa)) lie on the Extracellular side of the membrane. A disordered region spans residues 1342–1408 (TGGKTTLTLP…GNNTRRLPAV (67 aa)). A compositionally biased stretch (low complexity) spans 1387–1408 (TTRTSGGNRGTVGNNTRRLPAV).

Belongs to the patched family. Germ line and its progenitors.

It is found in the membrane. Its function is as follows. Required but not essential for cytokinesis of mitotically proliferating germ cells. This is Protein patched homolog 1 (ptc-1) from Caenorhabditis elegans.